A 294-amino-acid chain; its full sequence is MSSELLQEVPKSIEHVKHIILILSGKGGVGKSSVTTQVALTLVNKGFNVGVLDIDLTGPSLPRMFGVENKQVHQSTQGWVPVSVYNNNNNQGTDSKRGNLSLMSLGFLLGDRGNSVVWRGPKKTAMIKQFLKDVVWGSTETPLDYLLIDTPPGTSDEHIAIAEELRWANPIDGAIIVTTPQQVATADVRKEINFCKKVNFQILGIVENMSGFICPHCSECTNIFSSGGGKALSEQLNLTYLGNVPIDPQFVELVELQNEQENKKLIELYDDCELKPILNGIVDKILDKNLPSRI.

ATP is bound at residue 25–32 (GKGGVGKS). Residues C214 and C217 each coordinate [4Fe-4S] cluster.

The protein belongs to the Mrp/NBP35 ATP-binding proteins family. NUBP2/CFD1 subfamily. Heterotetramer of 2 NBP35 and 2 CFD1 chains. [4Fe-4S] cluster is required as a cofactor.

The protein localises to the cytoplasm. Functionally, component of the cytosolic iron-sulfur (Fe/S) protein assembly (CIA) machinery. Required for maturation of extramitochondrial Fe-S proteins. The NBP35-CFD1 heterotetramer forms a Fe-S scaffold complex, mediating the de novo assembly of an Fe-S cluster and its transfer to target apoproteins. Required for biogenesis and export of both ribosomal subunits, which may reflect a role in assembly of the Fe/S clusters in RLI1, a protein which performs rRNA processing and ribosome export. The polypeptide is Cytosolic Fe-S cluster assembly factor CFD1 (Candida albicans (strain SC5314 / ATCC MYA-2876) (Yeast)).